The chain runs to 196 residues: Small ribosomal subunit protein uS4c (196 aa).

A disordered region spans residues 17–36 (ALPGLTRKTPKSGSNLKKKF). The region spanning 89–150 (MRLDNIVFRL…NQRSKRLVQN (62 aa)) is the S4 RNA-binding domain.

The protein belongs to the universal ribosomal protein uS4 family. In terms of assembly, part of the 30S ribosomal subunit. Contacts protein S5. The interaction surface between S4 and S5 is involved in control of translational fidelity.

Its subcellular location is the plastid. It is found in the chloroplast. Its function is as follows. One of the primary rRNA binding proteins, it binds directly to 16S rRNA where it nucleates assembly of the body of the 30S subunit. In terms of biological role, with S5 and S12 plays an important role in translational accuracy. This is Small ribosomal subunit protein uS4c (rps4) from Tragus racemosus (Carrot grass).